A 100-amino-acid chain; its full sequence is Small ribosomal subunit protein uS14 (100 aa).

This sequence belongs to the universal ribosomal protein uS14 family. As to quaternary structure, part of the 30S ribosomal subunit. Contacts proteins S3 and S10.

Binds 16S rRNA, required for the assembly of 30S particles and may also be responsible for determining the conformation of the 16S rRNA at the A site. This Trichodesmium erythraeum (strain IMS101) protein is Small ribosomal subunit protein uS14.